We begin with the raw amino-acid sequence, 128 residues long: Small ribosomal subunit protein uS13 (128 aa).

Residues 98 to 128 (VRGQRTRTNARTRKGPRPRIGVKKKGKQAGS) are disordered. A compositionally biased stretch (basic residues) spans 101–128 (QRTRTNARTRKGPRPRIGVKKKGKQAGS).

This sequence belongs to the universal ribosomal protein uS13 family. In terms of assembly, part of the 30S ribosomal subunit. Forms a loose heterodimer with protein S19. Forms two bridges to the 50S subunit in the 70S ribosome.

Functionally, located at the top of the head of the 30S subunit, it contacts several helices of the 16S rRNA. In the 70S ribosome it contacts the 23S rRNA (bridge B1a) and protein L5 of the 50S subunit (bridge B1b), connecting the 2 subunits; these bridges are implicated in subunit movement. Contacts the tRNAs in the A and P-sites. This chain is Small ribosomal subunit protein uS13, found in Thermomicrobium roseum (strain ATCC 27502 / DSM 5159 / P-2).